A 382-amino-acid polypeptide reads, in one-letter code: Lipid-A-disaccharide synthase (382 aa).

It belongs to the LpxB family.

It carries out the reaction 2-N,3-O-bis[(3R)-3-hydroxytetradecanoyl]-alpha-D-glucosaminyl 1-phosphate + UDP-2-N,3-O-bis[(3R)-3-hydroxytetradecanoyl]-alpha-D-glucosamine = lipid A disaccharide (E. coli) + UDP + H(+). The enzyme catalyses a lipid X + a UDP-2-N,3-O-bis[(3R)-3-hydroxyacyl]-alpha-D-glucosamine = a lipid A disaccharide + UDP + H(+). It functions in the pathway glycolipid biosynthesis; lipid IV(A) biosynthesis; lipid IV(A) from (3R)-3-hydroxytetradecanoyl-[acyl-carrier-protein] and UDP-N-acetyl-alpha-D-glucosamine: step 5/6. In terms of biological role, condensation of UDP-2,3-diacylglucosamine and 2,3-diacylglucosamine-1-phosphate to form lipid A disaccharide, a precursor of lipid A, a phosphorylated glycolipid that anchors the lipopolysaccharide to the outer membrane of the cell. This chain is Lipid-A-disaccharide synthase, found in Salmonella arizonae (strain ATCC BAA-731 / CDC346-86 / RSK2980).